Reading from the N-terminus, the 176-residue chain is Probable DNA-directed RNA polymerase subunit delta (176 aa).

The region spanning 14 to 81 (KSFIDMAYTL…GENLWGLRDW (68 aa)) is the HTH HARE-type domain. A disordered region spans residues 114-176 (LGEDEMDDDD…VFEDEEDFND (63 aa)). 2 stretches are compositionally biased toward acidic residues: residues 116 to 145 (EDEM…QVEE) and 153 to 176 (VIEE…DFND).

Belongs to the RpoE family. In terms of assembly, RNAP is composed of a core of 2 alpha, a beta and a beta' subunits. The core is associated with a delta subunit and one of several sigma factors.

Functionally, participates in both the initiation and recycling phases of transcription. In the presence of the delta subunit, RNAP displays an increased specificity of transcription, a decreased affinity for nucleic acids, and an increased efficiency of RNA synthesis because of enhanced recycling. The polypeptide is Probable DNA-directed RNA polymerase subunit delta (Staphylococcus aureus (strain JH1)).